Consider the following 577-residue polypeptide: Phosphoethanolamine transferase CptA (577 aa).

Transmembrane regions (helical) follow at residues 17 to 37 (LGWALLYFWFFSTLLQAIIYL), 45 to 65 (GLRDSLLYSSLWLIPVFLFPG), 69 to 89 (VIAAVIGVVLWAASLAALSYY), 119 to 139 (YFSLKIVLVALAYTVAAILLW), and 154 to 174 (LVSFALLYGLILHPIAMNTFI).

Belongs to the phosphoethanolamine transferase family. EptC/CptA subfamily.

It localises to the cell inner membrane. It participates in bacterial outer membrane biogenesis; LPS core biosynthesis. In terms of biological role, catalyzes the addition of a phosphoethanolamine moiety to the outer membrane lipopolysaccharide core. This is Phosphoethanolamine transferase CptA (cptA) from Salmonella typhimurium (strain LT2 / SGSC1412 / ATCC 700720).